Reading from the N-terminus, the 427-residue chain is MQFSRVLAALCGVLLCASGLFAASGDFCDSSLCLNGGTCLMGQDNDIYCLCPEGFTGLVCNETEKGPCSPNPCFHDAKCLVTEDTQRGDIFTEYICQCPVGYSGIHCELGCSTKLGLEGGAIADSQISASSVYMGFMGLQRWGPELARLYRTGIVNAWTASSYDSKPWIQVDFLRKMRVSGVMTQGASRAGRAEYLKTFKVAYSLDGRRFEFIQDESGTGDKEFMGNQDNNSLKINMFNPTLEAQYIRLYPVSCHRGCTLRFELLGCELHGCSEPLGLKNNTIPDSQITASSSYKTWNLRAFGWYPHLGRLDNQGKINAWTAQSNSAKEWLQVDLGTQKKVTGIITQGARDFGHIQYVASYKVAHSDDGVQWTVYEEQGTSKVFQGNLDNNSHKKNIFEKPFMARYVRVLPLSWHNRITLRLELLGC.

Positions 1 to 22 are cleaved as a signal peptide; it reads MQFSRVLAALCGVLLCASGLFA. 2 consecutive EGF-like domains span residues 24-61 and 64-108; these read SGDF…LVCN and EKGP…IHCE. Disulfide bonds link C28/C39, C33/C49, and C51/C60. Residue N61 is glycosylated (N-linked (GlcNAc...) asparagine). Disulfide bonds link C68–C79, C73–C96, C98–C107, C111–C267, C254–C258, and C272–C427. Positions 87–89 match the Cell attachment site motif; it reads RGD. F5/8 type C domains lie at 111 to 267 and 272 to 427; these read CSTK…LLGC and CSEP…LLGC. A glycan (N-linked (GlcNAc...) asparagine) is linked at N230. 2 N-linked (GlcNAc...) asparagine glycosylation sites follow: N280 and N390.

As to expression, spleen, lung, heart, brain and muscle.

It is found in the membrane. It localises to the secreted. The protein resides in the cytoplasmic vesicle. The protein localises to the secretory vesicle. Its subcellular location is the acrosome membrane. In terms of biological role, contributes to phagocytic removal of apoptotic cells in many tissues. Plays an important role in the maintenance of intestinal epithelial homeostasis and the promotion of mucosal healing. Promotes VEGF-dependent neovascularization. Specific ligand for the alpha-v/beta-3 and alpha-v/beta-5 receptors. Also binds to phosphatidylserine-enriched cell surfaces in a receptor-independent manner. Zona pellucida-binding protein which may play a role in gamete interaction. Appears to participate in the O-acetylation of GD3 ganglioside sialic acid. The chain is Lactadherin (Mfge8) from Rattus norvegicus (Rat).